The chain runs to 92 residues: Small ribosomal subunit protein uS19 (92 aa).

This sequence belongs to the universal ribosomal protein uS19 family.

Functionally, protein S19 forms a complex with S13 that binds strongly to the 16S ribosomal RNA. This Cellvibrio japonicus (strain Ueda107) (Pseudomonas fluorescens subsp. cellulosa) protein is Small ribosomal subunit protein uS19.